The chain runs to 296 residues: MKIIVPATSANLGAGFDSIGIAVSLYLTVEVLEESSDWKIDHDLGENIPTDERNLLLTTLSAVLEDKNVALPAKYHLKMTSEVPLARGLGSSSSVIIAGIELANQLAKLNLTSDEKLKLACEIEGHPDNVAPALLGNLVIASTVAGKTSHIVADFPSCALLAFVPDYELKTVESRQVLPNELTYKEAVAASSIANVLTASLLTNNLEVAGQMMEADRFHESYRASLIPELQLLREIGHEFGAYGTYLSGAGPTVMLLVPDNKLTLLTEKIMEKNLTGHLYPLKIDNKGLQVEESVF.

Residue 84 to 94 participates in ATP binding; it reads PLARGLGSSSS.

Belongs to the GHMP kinase family. Homoserine kinase subfamily.

It is found in the cytoplasm. The enzyme catalyses L-homoserine + ATP = O-phospho-L-homoserine + ADP + H(+). It participates in amino-acid biosynthesis; L-threonine biosynthesis; L-threonine from L-aspartate: step 4/5. Functionally, catalyzes the ATP-dependent phosphorylation of L-homoserine to L-homoserine phosphate. This Lactococcus lactis subsp. cremoris (strain SK11) protein is Homoserine kinase.